Here is a 562-residue protein sequence, read N- to C-terminus: Tetratricopeptide repeat protein 34 (562 aa).

The segment at 1 to 30 (MLHKKPQRANENGISQRKKPSDQDNSSVKE) is disordered. Positions 19–30 (KPSDQDNSSVKE) are enriched in basic and acidic residues. 8 TPR repeats span residues 51–84 (DVSR…SSQR), 175–208 (KDSL…EPYN), 210–242 (EALS…DASY), 304–337 (AHFH…NAID), 388–421 (FQAA…SNNN), 423–455 (KYLR…HSSH), 461–494 (AEDY…EHAS), and 509–542 (AGIF…DENN).

The chain is Tetratricopeptide repeat protein 34 (ttc34) from Xenopus laevis (African clawed frog).